The following is a 457-amino-acid chain: Arginine biosynthesis bifunctional protein ArgJ, mitochondrial (457 aa).

Residues threonine 184, lysine 213, threonine 224, glutamate 312, asparagine 452, and threonine 457 each contribute to the substrate site. Residue threonine 224 is the Nucleophile of the active site.

Belongs to the ArgJ family. As to quaternary structure, heterodimer of an alpha and a beta chain. Post-translationally, the alpha and beta chains are autoproteolytically processed from a single precursor protein within the mitochondrion.

It localises to the mitochondrion matrix. It carries out the reaction N(2)-acetyl-L-ornithine + L-glutamate = N-acetyl-L-glutamate + L-ornithine. It catalyses the reaction L-glutamate + acetyl-CoA = N-acetyl-L-glutamate + CoA + H(+). Its pathway is amino-acid biosynthesis; L-arginine biosynthesis; L-ornithine and N-acetyl-L-glutamate from L-glutamate and N(2)-acetyl-L-ornithine (cyclic): step 1/1. The protein operates within amino-acid biosynthesis; L-arginine biosynthesis; N(2)-acetyl-L-ornithine from L-glutamate: step 1/4. Its function is as follows. Catalyzes two activities which are involved in the cyclic version of arginine biosynthesis: the synthesis of acetylglutamate from glutamate and acetyl-CoA, and of ornithine by transacetylation between acetylornithine and glutamate. The protein is Arginine biosynthesis bifunctional protein ArgJ, mitochondrial of Aspergillus terreus (strain NIH 2624 / FGSC A1156).